The following is a 330-amino-acid chain: Tryptophan--tRNA ligase (330 aa).

ATP is bound by residues Gln-6–Thr-8 and Gly-14–Asn-15. The 'HIGH' region signature appears at Pro-7–Asn-15. Asp-130 lines the L-tryptophan pocket. Residues Gly-142–Asp-144, Val-185, and Lys-194–Ser-198 contribute to the ATP site. The 'KMSKS' region signature appears at Lys-194–Ser-198.

Belongs to the class-I aminoacyl-tRNA synthetase family. In terms of assembly, homodimer.

The protein resides in the cytoplasm. It carries out the reaction tRNA(Trp) + L-tryptophan + ATP = L-tryptophyl-tRNA(Trp) + AMP + diphosphate + H(+). Its function is as follows. Catalyzes the attachment of tryptophan to tRNA(Trp). In Thermosynechococcus vestitus (strain NIES-2133 / IAM M-273 / BP-1), this protein is Tryptophan--tRNA ligase.